A 236-amino-acid polypeptide reads, in one-letter code: Small ribosomal subunit protein uS3 (236 aa).

One can recognise a KH type-2 domain in the interval 39-107 (IREVLEKQLK…EVHLNIVEVR (69 aa)). Residues 214–236 (ASERRALEGGDSGGGRSRRDDRG) are disordered.

Belongs to the universal ribosomal protein uS3 family. Part of the 30S ribosomal subunit. Forms a tight complex with proteins S10 and S14.

Binds the lower part of the 30S subunit head. Binds mRNA in the 70S ribosome, positioning it for translation. The chain is Small ribosomal subunit protein uS3 from Parvibaculum lavamentivorans (strain DS-1 / DSM 13023 / NCIMB 13966).